A 639-amino-acid polypeptide reads, in one-letter code: Chaperone protein DnaK (639 aa).

Position 198 is a phosphothreonine; by autocatalysis (T198). Over residues 603–618 (AKAQTQGGAQEGAAKQ) the composition is skewed to low complexity. The tract at residues 603 to 639 (AKAQTQGGAQEGAAKQSNATADDVVDAEFEEVKDDKK) is disordered. Residues 625–639 (DVVDAEFEEVKDDKK) are compositionally biased toward acidic residues.

It belongs to the heat shock protein 70 family.

Acts as a chaperone. The polypeptide is Chaperone protein DnaK (Shewanella sp. (strain ANA-3)).